A 208-amino-acid chain; its full sequence is Protein GrpE (208 aa).

Residues 1–25 (MVDNKDFNEELKENIQEELDNETKA) are compositionally biased toward basic and acidic residues. Positions 1-38 (MVDNKDFNEELKENIQEELDNETKAENPNIDEEVEEVS) are disordered. Over residues 29 to 38 (NIDEEVEEVS) the composition is skewed to acidic residues.

Belongs to the GrpE family. In terms of assembly, homodimer.

The protein resides in the cytoplasm. Participates actively in the response to hyperosmotic and heat shock by preventing the aggregation of stress-denatured proteins, in association with DnaK and GrpE. It is the nucleotide exchange factor for DnaK and may function as a thermosensor. Unfolded proteins bind initially to DnaJ; upon interaction with the DnaJ-bound protein, DnaK hydrolyzes its bound ATP, resulting in the formation of a stable complex. GrpE releases ADP from DnaK; ATP binding to DnaK triggers the release of the substrate protein, thus completing the reaction cycle. Several rounds of ATP-dependent interactions between DnaJ, DnaK and GrpE are required for fully efficient folding. The protein is Protein GrpE of Clostridium perfringens (strain 13 / Type A).